The chain runs to 609 residues: UvrABC system protein C (609 aa).

Residues 16–94 form the GIY-YIG domain; the sequence is HLPGVYRHLD…IKSLRPRYNI (79 aa). A UVR domain is found at 203 to 238; the sequence is REVMDEIEARMLQASTELRFEEAAVLRDQMGSLSKV.

It belongs to the UvrC family. Interacts with UvrB in an incision complex.

It is found in the cytoplasm. In terms of biological role, the UvrABC repair system catalyzes the recognition and processing of DNA lesions. UvrC both incises the 5' and 3' sides of the lesion. The N-terminal half is responsible for the 3' incision and the C-terminal half is responsible for the 5' incision. The sequence is that of UvrABC system protein C from Bordetella bronchiseptica (strain ATCC BAA-588 / NCTC 13252 / RB50) (Alcaligenes bronchisepticus).